The sequence spans 426 residues: Tol-Pal system protein TolB (426 aa).

The signal sequence occupies residues 1–25; that stretch reads MNILLSRFRLLLAAALAALSWGAQA.

Belongs to the TolB family. In terms of assembly, the Tol-Pal system is composed of five core proteins: the inner membrane proteins TolA, TolQ and TolR, the periplasmic protein TolB and the outer membrane protein Pal. They form a network linking the inner and outer membranes and the peptidoglycan layer.

The protein resides in the periplasm. Part of the Tol-Pal system, which plays a role in outer membrane invagination during cell division and is important for maintaining outer membrane integrity. The sequence is that of Tol-Pal system protein TolB from Aromatoleum aromaticum (strain DSM 19018 / LMG 30748 / EbN1) (Azoarcus sp. (strain EbN1)).